The sequence spans 683 residues: Dynein, 78 kDa intermediate chain, flagellar outer arm (683 aa).

The interval 1 to 42 (MPALSPAKKGTDKGKTGKKTGKQEQNAQDYIPPPPPMPGDEA) is disordered. WD repeat units lie at residues 358 to 398 (HTES…DEPI), 407 to 450 (KLND…LIPE), 562 to 602 (DLND…LLPL), and 608 to 647 (VKKAKLTKLVFNPKHPIVLVGDDKGCVTSLKLSPNLRITS).

Belongs to the dynein intermediate chain family. In terms of assembly, consists of at least 3 heavy chains (alpha, beta and gamma), 2 intermediate chains and 8 light chains.

It is found in the cytoplasm. It localises to the cytoskeleton. The protein resides in the flagellum axoneme. Functionally, is essential for arm assembly or attachment to the outer doublet microtubule. The sequence is that of Dynein, 78 kDa intermediate chain, flagellar outer arm (ODA9) from Chlamydomonas reinhardtii (Chlamydomonas smithii).